A 305-amino-acid polypeptide reads, in one-letter code: uncharacterized protein (305 aa).

Positions 267–287 (ADEQEKNWNGGAKKNARAEPA) are disordered.

The protein belongs to the DnaB/DnaD family.

This is an uncharacterized protein from Listeria innocua serovar 6a (strain ATCC BAA-680 / CLIP 11262).